A 284-amino-acid chain; its full sequence is MAIDAQKLVVVIVIVVVPLLFKFIIGPKTKPVLDPKRNDFQSFPLVEKTILTHNTSMYKFGLPHADDVLGLPIGQHIVIKANINGKDITRSYTPTSLDGDTKGNFELLVKSYPTGNVSKMIGELKIGDSIQIKGPRGNYHYERNCRSHLGMIAGGTGIAPMYQIMKAIAMDPHDTTKVSLVFGNVHEEDILLKKELEALVAMKPSQFKIVYYLDSPDREDWTGGVGYITKDVIKEHLPAATMDNVQILICGPPAMVASVRRSTVDLGFRRSKPLSKMEDQVFVF.

Residues 7–27 (KLVVVIVIVVVPLLFKFIIGP) traverse the membrane as a helical segment. The 105-residue stretch at 38 to 142 (NDFQSFPLVE…KGPRGNYHYE (105 aa)) folds into the FAD-binding FR-type domain. FAD is bound by residues 122 to 137 (GELK…GPRG) and 148 to 180 (HLGM…KVSL).

The protein belongs to the flavoprotein pyridine nucleotide cytochrome reductase family. As to quaternary structure, monomer. Component of the 2-(3-amino-3-carboxypropyl)histidine synthase complex composed of DPH1, DPH2, KTI11/DPH3 and a NADH-dependent reductase, predominantly CBR1. Interacts with KTI11/DPH3. Interacts with STE20. It depends on FAD as a cofactor.

It localises to the mitochondrion outer membrane. It carries out the reaction 2 Fe(III)-[cytochrome b5] + NADH = 2 Fe(II)-[cytochrome b5] + NAD(+) + H(+). The enzyme catalyses 2 Fe(3+)-[Dph3] + NADH = 2 Fe(2+)-[Dph3] + NAD(+) + H(+). It participates in protein modification; peptidyl-diphthamide biosynthesis. Competitively inhibited by NAD(+). Inhibited by mercurials such as p-chloromercuribenzoate (PCMB) and HgCl(2). Enzymatic activity increases under anaerobic conditions. NADH-dependent reductase for KTI11/DPH3 and cytochrome b5. Required for the first step of diphthamide biosynthesis, a post-translational modification of histidine which occurs in elongation factor 2. DPH1 and DPH2 transfer a 3-amino-3-carboxypropyl (ACP) group from S-adenosyl-L-methionine (SAM) to a histidine residue, the reaction is assisted by a reduction system comprising KTI11/DPH3 and a NADH-dependent reductase, predominantly CBR1. By reducing KTI11/DPH3, also involved in the formation of the tRNA wobble base modification mcm5s 2U (5-methoxycarbonylmethyl-2-thiouridine), mediated by the elongator complex. The cytochrome b5/NADH cytochrome b5 reductase electron transfer system supports the catalytic activity of several sterol biosynthetic enzymes. Plays a role in bud morphology. The chain is NADH-cytochrome b5 reductase 1 (CBR1) from Saccharomyces cerevisiae (strain ATCC 204508 / S288c) (Baker's yeast).